The following is a 142-amino-acid chain: Nucleoside diphosphate kinase (142 aa).

6 residues coordinate ATP: lysine 11, phenylalanine 59, arginine 87, threonine 93, arginine 104, and asparagine 114. Catalysis depends on histidine 117, which acts as the Pros-phosphohistidine intermediate.

Belongs to the NDK family. Homotetramer. Mg(2+) serves as cofactor.

The protein localises to the cytoplasm. The enzyme catalyses a 2'-deoxyribonucleoside 5'-diphosphate + ATP = a 2'-deoxyribonucleoside 5'-triphosphate + ADP. The catalysed reaction is a ribonucleoside 5'-diphosphate + ATP = a ribonucleoside 5'-triphosphate + ADP. Its function is as follows. Major role in the synthesis of nucleoside triphosphates other than ATP. The ATP gamma phosphate is transferred to the NDP beta phosphate via a ping-pong mechanism, using a phosphorylated active-site intermediate. The chain is Nucleoside diphosphate kinase from Dechloromonas aromatica (strain RCB).